We begin with the raw amino-acid sequence, 366 residues long: Homeobox-leucine zipper protein HOX21 (366 aa).

2 disordered regions span residues Gln25–Gln81 and Met94–Arg132. Residues His36–His48 are compositionally biased toward basic residues. The span at Gly62–Pro74 shows a compositional bias: pro residues. Residues Gly103–Gly115 show a composition bias toward gly residues. Positions Ala127–Gln186 form a DNA-binding region, homeobox. Positions Lys185–Ser229 are leucine-zipper. 2 disordered regions span residues Glu239–Gly287 and Leu312–Ala336. Residues Ala240 to Ile252 are compositionally biased toward polar residues.

Belongs to the HD-ZIP homeobox family. Class I subfamily. Expressed in seedlings, roots, stems, leaf blades and panicles.

The protein resides in the nucleus. In terms of biological role, probable transcription factor. The polypeptide is Homeobox-leucine zipper protein HOX21 (HOX21) (Oryza sativa subsp. japonica (Rice)).